The chain runs to 464 residues: Calcitonin gene-related peptide type 1 receptor (464 aa).

The first 23 residues, 1 to 23, serve as a signal peptide directing secretion; it reads MMDKKCTLCFLFLLLLNMALIAA. Over 24 to 139 the chain is Extracellular; it reads ESEEGANQTD…STHEKVKTAL (116 aa). N30, N66, N118, N123, N128, and N129 each carry an N-linked (GlcNAc...) asparagine glycan. 3 disulfide bridges follow: C48–C74, C65–C105, and C88–C127. The helical transmembrane segment at 140-164 threads the bilayer; it reads NLFYLTIIGHGLSIASLIISLIIFF. Residues 165 to 175 are Cytoplasmic-facing; that stretch reads YFKSLSCQRIT. The helical transmembrane segment at 176–198 threads the bilayer; sequence LHKNLFFSFVCNSIVTIIHLTAV. Over 199-209 the chain is Extracellular; sequence ANNQALVATNP. A helical transmembrane segment spans residues 210 to 238; the sequence is VSCKVSQFIHLYLMGCNYFWMLCEGIYLH. The Cytoplasmic portion of the chain corresponds to 239 to 252; sequence TLIVVAVFAEKQHL. Residues 253–273 form a helical membrane-spanning segment; sequence MWYYFLGWGFPLLPACIHAIA. The Extracellular portion of the chain corresponds to 274-289; sequence RSLYYNDNCWISSDTH. Residues 288-289 are required for RAMP3 interaction; the sequence is TH. The chain crosses the membrane as a helical span at residues 290–314; it reads LLYIIHGPICAALLVNLFFLLNIVR. At 315-329 the chain is on the cytoplasmic side; the sequence is VLITKLKVTHQAESN. The helical transmembrane segment at 330 to 351 threads the bilayer; it reads LYMKAVRATLILVPLLGIEFVL. At 352–366 the chain is on the extracellular side; the sequence is FPWRPEGKVAEEVYD. Residues 367 to 387 traverse the membrane as a helical segment; sequence YVMHILMHYQGLLVSTIFCFF. The Cytoplasmic segment spans residues 388–464; the sequence is NGEVQAILRR…KPEKMYDLVM (77 aa). A phosphoserine mark is found at S420 and S445.

The protein belongs to the G-protein coupled receptor 2 family. In terms of assembly, heterodimer of CALCRL and RAMP1; the receptor complex functions as CGRP receptor. Heterodimer of CALCRL and RAMP2 or CALCRL and RAMP3; the complexes function as adrenomedullin receptor.

The protein resides in the cell membrane. In terms of biological role, g protein-coupled receptor which specificity is determined by its interaction with receptor-activity-modifying proteins (RAMPs). Together with RAMP1, form the receptor complex for calcitonin-gene-related peptides CALCA/CGRP1 and CALCB/CGRP2. Together with RAMP2 or RAMP3, function as receptor complexes for adrenomedullin (ADM and ADM2). Ligand binding causes a conformation change that triggers signaling via guanine nucleotide-binding proteins (G proteins) and modulates the activity of downstream effectors. Activates cAMP-dependent pathway. The chain is Calcitonin gene-related peptide type 1 receptor from Rattus norvegicus (Rat).